An 82-amino-acid polypeptide reads, in one-letter code: Small ribosomal subunit protein bS20 (82 aa).

The protein belongs to the bacterial ribosomal protein bS20 family.

Its function is as follows. Binds directly to 16S ribosomal RNA. The protein is Small ribosomal subunit protein bS20 of Streptococcus suis (strain 98HAH33).